The following is a 49-amino-acid chain: Delta-actitoxin-Axm1a (49 aa).

3 cysteine pairs are disulfide-bonded: Cys-4–Cys-46, Cys-6–Cys-36, and Cys-29–Cys-47.

The protein belongs to the sea anemone sodium channel inhibitory toxin family. Type I subfamily.

Its subcellular location is the secreted. It is found in the nematocyst. Functionally, binds specifically to voltage-gated sodium channels (Nav) (site 3), thereby delaying their inactivation. This toxin retains the greatest capacity to discriminate between the cardiac (Nav1.5/SCN5A) and neuronal sodium channels (2.5 nM versus 120 nM, when electrophysiologically tested and 14 nM versus 400 nM, when tested by ion flux), whereas its paralog Anthopleurin-B has the highest affinity of all anemone toxins for the mammalian sodium channel. Its ability to differentiate between cardiac and skeletal channels appears to be associated with domain 4 of the channel. This toxin does not slow or inhibit closed-state inactivation of cardiac sodium channels, but selectively modifies inactivation from the open-state. It does not display phospholipid-binding activities, suggesting that the domain IV S3-S4 linker is located at the extracellular surface and not buried in the phospholipid bilayer. The polypeptide is Delta-actitoxin-Axm1a (Anthopleura xanthogrammica (Giant green sea anemone)).